A 186-amino-acid polypeptide reads, in one-letter code: MLALISRLLDWFRSLFWKEEMELTLVGLQYSGKTTFVNVIASGQFSEDMIPTVGFNMRKVTKGNVTIKIWDIGGQPRFRSMWERYCRGVNAIVYMIDAAYREKIEASRNELHNLLDKPQLQGIPVLVLGNKRDLPNALDEKQLIEKMNLSAIQDREICCYSISCKEKDNIDITLQWLIQHSKSRRS.

Positions 1–19 (MLALISRLLDWFRSLFWKE) form an intramembrane region, note=Mediates targeting to membranes. Residues 29-35 (QYSGKTT), 71-75 (DIGGQ), and 130-133 (NKRD) contribute to the GTP site. K141 participates in a covalent cross-link: Glycyl lysine isopeptide (Lys-Gly) (interchain with G-Cter in ubiquitin).

Belongs to the small GTPase superfamily. Arf family. Interacts with tubulin. Interacts with BORCS5; recruits ARL8B to lysosomes. Interacts with VPS41; the interaction mediates the recruitment of the HOPS complex to lysosomes. Interacts (GTP-bound form) with PLEKHM2 (via RUN domain); the interaction is required to recruit the motor protein kinesin-1 on lysosomes. Interacts (GTP-bound form) with PLEKHM1 (via RUN domain); the interaction is required for PLEKHM1 localization to lysosomes and for ARL8B function in delivery and degradation of endocytic and autophagic cargo in lysosomes. PLEKHM1 and PLEKHM2 compete for interaction with ARL8B. Interacts (GTP-bound form) with RUFY1; the interaction is required for RUFY1 endosomal location. When GTP-bound, interacts with RUFY3 and RUFY4, but not with RUFY1, nor RUFY2. In terms of processing, ubiquitinated at Lys-141 by RNF167, leading to its degradation.

It localises to the late endosome membrane. It is found in the lysosome membrane. Its subcellular location is the cytoplasm. The protein localises to the cytoskeleton. The protein resides in the spindle. It localises to the cell projection. It is found in the axon. Its subcellular location is the synapse. The protein localises to the cytolytic granule membrane. The protein resides in the early endosome membrane. It catalyses the reaction GTP + H2O = GDP + phosphate + H(+). Small GTPase which cycles between active GTP-bound and inactive GDP-bound states. In its active state, binds to a variety of effector proteins playing a key role in the regulation of lysosomal positioning which is important for nutrient sensing, natural killer cell-mediated cytotoxicity and antigen presentation. Along with its effectors, orchestrates lysosomal transport and fusion. Localizes specifically to lysosomal membranes and mediates anterograde lysosomal motility by recruiting PLEKHM2, which in turn recruits the motor protein kinesin-1 on lysosomes. Required for lysosomal and cytolytic granule exocytosis. Critical factor involved in NK cell-mediated cytotoxicity. Drives the polarization of cytolytic granules and microtubule-organizing centers (MTOCs) toward the immune synapse between effector NK lymphocytes and target cells. In neurons, mediates the anterograde axonal long-range transport of presynaptic lysosome-related vesicles required for presynaptic biogenesis and synaptic function. Also acts as a regulator of endosome to lysosome trafficking pathways of special significance for host defense. Recruits RUFY1 onto early endosomes regulating endosomes to trans-Golgi network proteins retrieval. Regulates cargo trafficking to lysosomes by binding to PLEKHM1 and recruiting the HOPS subunit VPS41, resulting in functional assembly of the HOPS complex on lysosomal membranes. Plays an important role in cargo delivery to lysosomes for antigen presentation and microbial killing. Directs the intersection of CD1d with lipid antigens in lysosomes, and plays a role in intersecting phagosomes with lysosomes to generate phagolysosomes that kill microbes. Involved in the process of MHC II presentation. Regulates the delivery of antigens to lysosomes and the formation of MHC II-peptide complexes through the recruitment of the HOPS complex to lysosomes allowing the fusion of late endosomes to lysosomes. May play a role in chromosome segregation. This is ADP-ribosylation factor-like protein 8B (ARL8B) from Pongo abelii (Sumatran orangutan).